We begin with the raw amino-acid sequence, 570 residues long: Urease subunit alpha (570 aa).

The 440-residue stretch at 131 to 570 (GGMDSHIHFI…LPMAQRYFLF (440 aa)) folds into the Urease domain. Ni(2+) is bound by residues H136, H138, and K219. K219 is subject to N6-carboxylysine. Position 221 (H221) interacts with substrate. 2 residues coordinate Ni(2+): H248 and H274. H322 acts as the Proton donor in catalysis. D362 lines the Ni(2+) pocket.

It belongs to the metallo-dependent hydrolases superfamily. Urease alpha subunit family. As to quaternary structure, heterotrimer of UreA (gamma), UreB (beta) and UreC (alpha) subunits. Three heterotrimers associate to form the active enzyme. Ni cation serves as cofactor. In terms of processing, carboxylation allows a single lysine to coordinate two nickel ions.

It is found in the cytoplasm. It carries out the reaction urea + 2 H2O + H(+) = hydrogencarbonate + 2 NH4(+). It functions in the pathway nitrogen metabolism; urea degradation; CO(2) and NH(3) from urea (urease route): step 1/1. This Rhizobium meliloti (strain 1021) (Ensifer meliloti) protein is Urease subunit alpha.